We begin with the raw amino-acid sequence, 259 residues long: Hydroxyethylthiazole kinase (259 aa).

M38 provides a ligand contact to substrate. The ATP site is built by R113 and S158. G185 contributes to the substrate binding site.

This sequence belongs to the Thz kinase family. Mg(2+) is required as a cofactor.

It catalyses the reaction 5-(2-hydroxyethyl)-4-methylthiazole + ATP = 4-methyl-5-(2-phosphooxyethyl)-thiazole + ADP + H(+). The protein operates within cofactor biosynthesis; thiamine diphosphate biosynthesis; 4-methyl-5-(2-phosphoethyl)-thiazole from 5-(2-hydroxyethyl)-4-methylthiazole: step 1/1. Functionally, catalyzes the phosphorylation of the hydroxyl group of 4-methyl-5-beta-hydroxyethylthiazole (THZ). The sequence is that of Hydroxyethylthiazole kinase from Leuconostoc citreum (strain KM20).